We begin with the raw amino-acid sequence, 488 residues long: Ribulose bisphosphate carboxylase large chain (488 aa).

Substrate-binding residues include Asn127 and Thr177. Lys179 (proton acceptor) is an active-site residue. Lys181 is a binding site for substrate. Mg(2+) contacts are provided by Lys205, Asp207, and Glu208. An N6-carboxylysine modification is found at Lys205. His297 (proton acceptor) is an active-site residue. Residues Arg298, His330, and Ser382 each coordinate substrate.

This sequence belongs to the RuBisCO large chain family. Type I subfamily. Heterohexadecamer of 8 large chains and 8 small chains. The cofactor is Mg(2+).

The protein localises to the plastid. It localises to the chloroplast. It carries out the reaction 2 (2R)-3-phosphoglycerate + 2 H(+) = D-ribulose 1,5-bisphosphate + CO2 + H2O. It catalyses the reaction D-ribulose 1,5-bisphosphate + O2 = 2-phosphoglycolate + (2R)-3-phosphoglycerate + 2 H(+). In terms of biological role, ruBisCO catalyzes two reactions: the carboxylation of D-ribulose 1,5-bisphosphate, the primary event in carbon dioxide fixation, as well as the oxidative fragmentation of the pentose substrate in the photorespiration process. Both reactions occur simultaneously and in competition at the same active site. This chain is Ribulose bisphosphate carboxylase large chain, found in Pylaiella littoralis (Seaweed).